An 841-amino-acid chain; its full sequence is Formin-like protein 10 (841 aa).

The signal sequence occupies residues 1–25 (MDGLCYVIFIIFSLLSCAFSPLSYA). A helical transmembrane segment spans residues 102 to 122 (LIPAISAVLAAATLIALAFFF). Disordered stretches follow at residues 137 to 166 (SKSLASDISQSQQQTLPCPPPRNNNTQNKL), 254 to 297 (ISSH…RTVR), and 403 to 512 (KSSW…SKQR). Residues 139-152 (SLASDISQSQQQTL) are compositionally biased toward polar residues. The span at 254–278 (ISSHSDSPAMSPSAAMSPPMNSTAP) shows a compositional bias: low complexity. Residues 279–293 (HWSTNQNTHSPSSPE) are compositionally biased toward polar residues. Positions 426–444 (LPPPQRPPPAMPEPPPLVP) are enriched in pro residues. An FH2 domain is found at 469-841 (EGTTDRPKPK…KKMEVTSSLA (373 aa)). Residues 502 to 512 (YNSSNANSKQR) are compositionally biased toward polar residues.

Belongs to the formin-like family. Class-I subfamily.

The protein localises to the membrane. Its function is as follows. Might be involved in the organization and polarity of the actin cytoskeleton. The polypeptide is Formin-like protein 10 (FH10) (Arabidopsis thaliana (Mouse-ear cress)).